Here is a 257-residue protein sequence, read N- to C-terminus: Imidazole glycerol phosphate synthase subunit HisF (257 aa).

Catalysis depends on residues Asp12 and Asp131.

This sequence belongs to the HisA/HisF family. In terms of assembly, heterodimer of HisH and HisF.

The protein resides in the cytoplasm. The enzyme catalyses 5-[(5-phospho-1-deoxy-D-ribulos-1-ylimino)methylamino]-1-(5-phospho-beta-D-ribosyl)imidazole-4-carboxamide + L-glutamine = D-erythro-1-(imidazol-4-yl)glycerol 3-phosphate + 5-amino-1-(5-phospho-beta-D-ribosyl)imidazole-4-carboxamide + L-glutamate + H(+). It participates in amino-acid biosynthesis; L-histidine biosynthesis; L-histidine from 5-phospho-alpha-D-ribose 1-diphosphate: step 5/9. IGPS catalyzes the conversion of PRFAR and glutamine to IGP, AICAR and glutamate. The HisF subunit catalyzes the cyclization activity that produces IGP and AICAR from PRFAR using the ammonia provided by the HisH subunit. The protein is Imidazole glycerol phosphate synthase subunit HisF of Marinomonas sp. (strain MWYL1).